The sequence spans 110 residues: Large ribosomal subunit protein uL22 (110 aa).

It belongs to the universal ribosomal protein uL22 family. In terms of assembly, part of the 50S ribosomal subunit.

Functionally, this protein binds specifically to 23S rRNA; its binding is stimulated by other ribosomal proteins, e.g. L4, L17, and L20. It is important during the early stages of 50S assembly. It makes multiple contacts with different domains of the 23S rRNA in the assembled 50S subunit and ribosome. Its function is as follows. The globular domain of the protein is located near the polypeptide exit tunnel on the outside of the subunit, while an extended beta-hairpin is found that lines the wall of the exit tunnel in the center of the 70S ribosome. The chain is Large ribosomal subunit protein uL22 from Methylococcus capsulatus (strain ATCC 33009 / NCIMB 11132 / Bath).